Here is a 70-residue protein sequence, read N- to C-terminus: Large ribosomal subunit protein eL38 (70 aa).

This sequence belongs to the eukaryotic ribosomal protein eL38 family.

This Aedes aegypti (Yellowfever mosquito) protein is Large ribosomal subunit protein eL38 (RpL38).